The primary structure comprises 159 residues: Outer envelope pore protein 16-3, chloroplastic/mitochondrial (159 aa).

M1 is subject to N-acetylmethionine. The segment at 1–65 (MDPAEMRYLE…IRTLKMMGTH (65 aa)) is contains beta strands. Helical transmembrane passes span 24 to 40 (ITGF…LATW), 62 to 79 (MGTH…YIGV), and 92 to 109 (FYNG…VLGY).

It belongs to the Tim17/Tim22/Tim23 family. Plastid outer envelope porin OEP16 (TC 1.B.30) subfamily. Homodimer and oligomers in membrane. Part of both the NADH-ubiquinone oxidoreductase complex I and of the TIM17:23 complex. Interacts with TIM23-2.

The protein localises to the plastid. It is found in the chloroplast outer membrane. The protein resides in the mitochondrion outer membrane. It localises to the mitochondrion inner membrane. In terms of biological role, voltage-dependent high-conductance channel with a slight cation-selectivity; selective for amino acids but excludes triosephosphates or uncharged sugars. Non-essential amino acid-selective channel protein and translocation pore for NADPH:protochlorophyllide oxidoreductase A (PORA) and possibly PORB. The protein is Outer envelope pore protein 16-3, chloroplastic/mitochondrial (OEP163) of Arabidopsis thaliana (Mouse-ear cress).